We begin with the raw amino-acid sequence, 626 residues long: tRNA uridine 5-carboxymethylaminomethyl modification enzyme MnmG (626 aa).

Position 13 to 18 (13 to 18 (GGGHAG)) interacts with FAD. 273 to 287 (GPRYCPSIEDKIHRF) lines the NAD(+) pocket.

It belongs to the MnmG family. Homodimer. Heterotetramer of two MnmE and two MnmG subunits. FAD serves as cofactor.

Its subcellular location is the cytoplasm. NAD-binding protein involved in the addition of a carboxymethylaminomethyl (cmnm) group at the wobble position (U34) of certain tRNAs, forming tRNA-cmnm(5)s(2)U34. The chain is tRNA uridine 5-carboxymethylaminomethyl modification enzyme MnmG from Acinetobacter baumannii (strain ATCC 17978 / DSM 105126 / CIP 53.77 / LMG 1025 / NCDC KC755 / 5377).